The chain runs to 678 residues: DNA ligase (678 aa).

Residues 32–36 (DSEYD), 81–82 (SL), and E113 each bind NAD(+). Catalysis depends on K115, which acts as the N6-AMP-lysine intermediate. Positions 136, 174, 291, and 315 each coordinate NAD(+). Residues C409, C412, C427, and C433 each contribute to the Zn(2+) site. The 83-residue stretch at 596-678 (ASDNPFAGKT…MRLLGESSDA (83 aa)) folds into the BRCT domain.

The protein belongs to the NAD-dependent DNA ligase family. LigA subfamily. It depends on Mg(2+) as a cofactor. Requires Mn(2+) as cofactor.

The catalysed reaction is NAD(+) + (deoxyribonucleotide)n-3'-hydroxyl + 5'-phospho-(deoxyribonucleotide)m = (deoxyribonucleotide)n+m + AMP + beta-nicotinamide D-nucleotide.. Functionally, DNA ligase that catalyzes the formation of phosphodiester linkages between 5'-phosphoryl and 3'-hydroxyl groups in double-stranded DNA using NAD as a coenzyme and as the energy source for the reaction. It is essential for DNA replication and repair of damaged DNA. This Sodalis glossinidius (strain morsitans) protein is DNA ligase.